The sequence spans 336 residues: tRNA N6-adenosine threonylcarbamoyltransferase (336 aa).

Residues His114 and His118 each coordinate Fe cation. Residues 136–140 (LVSGG), Asp169, Gly182, Asp186, and Asn275 each bind substrate. Residue Asp301 participates in Fe cation binding.

This sequence belongs to the KAE1 / TsaD family. The cofactor is Fe(2+).

Its subcellular location is the cytoplasm. It carries out the reaction L-threonylcarbamoyladenylate + adenosine(37) in tRNA = N(6)-L-threonylcarbamoyladenosine(37) in tRNA + AMP + H(+). In terms of biological role, required for the formation of a threonylcarbamoyl group on adenosine at position 37 (t(6)A37) in tRNAs that read codons beginning with adenine. Is involved in the transfer of the threonylcarbamoyl moiety of threonylcarbamoyl-AMP (TC-AMP) to the N6 group of A37, together with TsaE and TsaB. TsaD likely plays a direct catalytic role in this reaction. This Streptococcus pneumoniae (strain ATCC 700669 / Spain 23F-1) protein is tRNA N6-adenosine threonylcarbamoyltransferase.